The chain runs to 499 residues: Glycerol kinase (499 aa).

Residue Thr-12 coordinates ADP. Residues Thr-12, Thr-13, and Ser-14 each coordinate ATP. Thr-12 contacts sn-glycerol 3-phosphate. Arg-16 is a binding site for ADP. Positions 82, 83, 134, and 243 each coordinate sn-glycerol 3-phosphate. Glycerol-binding residues include Arg-82, Glu-83, Tyr-134, Asp-243, and Gln-244. ADP is bound by residues Thr-265 and Gly-308. The ATP site is built by Thr-265, Gly-308, Gln-312, and Gly-411. Gly-411 contacts ADP.

Belongs to the FGGY kinase family.

The catalysed reaction is glycerol + ATP = sn-glycerol 3-phosphate + ADP + H(+). The protein operates within polyol metabolism; glycerol degradation via glycerol kinase pathway; sn-glycerol 3-phosphate from glycerol: step 1/1. Inhibited by fructose 1,6-bisphosphate (FBP). Its function is as follows. Key enzyme in the regulation of glycerol uptake and metabolism. Catalyzes the phosphorylation of glycerol to yield sn-glycerol 3-phosphate. This chain is Glycerol kinase, found in Agrobacterium fabrum (strain C58 / ATCC 33970) (Agrobacterium tumefaciens (strain C58)).